We begin with the raw amino-acid sequence, 526 residues long: Tyrosine-protein kinase transforming protein Src (526 aa).

The segment at 1–57 is disordered; sequence MGSSKSKPKDPSQRRCSLEPPDSTHHGGFPASQTPNKTAAPDTHRTPSRSFGTVATE. The N-myristoyl glycine; by host moiety is linked to residue glycine 2. Positions 7-25 are enriched in basic and acidic residues; that stretch reads KPKDPSQRRCSLEPPDSTH. The region spanning 81 to 142 is the SH3 domain; it reads GGVTTFVALY…PSNYVAPSDS (62 aa). The SH2 domain occupies 148–245; sequence WYFGKITRRE…GLCHRLTNVC (98 aa). The Protein kinase domain occupies 267 to 517; sequence LRLEVKLGQG…TFEYLQAQLL (251 aa). ATP-binding positions include 273–281 and lysine 295; that span reads LGQGCFGEV. Residue aspartate 386 is the Proton acceptor of the active site. Tyrosine 416 is subject to Phosphotyrosine; by autocatalysis.

The protein belongs to the protein kinase superfamily. Tyr protein kinase family. SRC subfamily. The phosphorylated form is termed pp60v-src.

The enzyme catalyses L-tyrosyl-[protein] + ATP = O-phospho-L-tyrosyl-[protein] + ADP + H(+). Its function is as follows. This phosphoprotein, required for both the initiation and the maintenance of neoplastic transformation, is a protein kinase that catalyzes the phosphorylation of tyrosine residues in vitro. In Galliformes, this protein is Tyrosine-protein kinase transforming protein Src (V-SRC).